Consider the following 878-residue polypeptide: Ecdysone receptor (878 aa).

Disordered stretches follow at residues 1–27 and 209–254; these read MKRR…SSSN and GLGM…SKKG. The tract at residues 1–263 is modulating; that stretch reads MKRRWSNNGG…GPAPRVQEEL (263 aa). 2 consecutive NR C4-type zinc fingers follow at residues 264 to 284 and 300 to 324; these read CLVC…CEGC and CKFG…LKKC. A DNA-binding region (nuclear receptor) is located at residues 264–336; it reads CLVCGDRASG…VGMRPECVVP (73 aa). Residues 344-374 form a disordered region; that stretch reads RREKKAQKEKDKMTTSPSSQHGGNGSLASGG. A compositionally biased stretch (gly residues) spans 365-374; it reads GGNGSLASGG. The region spanning 419–654 is the NR LBD domain; it reads NQLAVIYKLI…FLEEIWDVHA (236 aa). Composition is skewed to low complexity over residues 698 to 709 and 728 to 759; these read TSAAAAAAQHQP and QTQP…QLQP. Residues 698–759 form a disordered region; it reads TSAAAAAAQH…QPQLQTQLQP (62 aa).

It belongs to the nuclear hormone receptor family. NR1 subfamily. In terms of assembly, heterodimer of USP and ECR. Only the heterodimer is capable of high-affinity binding to ecdysone. Interacts with trr in an ecdysone-dependent manner. Upon ecdysone stimulation, interacts with Nup98. Isoform B1 predominates over isoform A in larval tissues, imaginal histoblast nests and midgut islands. Isoform A predominates over B1 in imaginal disks, and the larval prothoracic gland.

It localises to the nucleus. Functionally, receptor for ecdysone. Binds to ecdysone response elements (ECRES) following ecdysone-binding, and recruitment of a complex containing the histone methyltransferase trr, leads to activate transcription of target genes. This chain is Ecdysone receptor (EcR), found in Drosophila melanogaster (Fruit fly).